Here is a 261-residue protein sequence, read N- to C-terminus: Thioesterase TesA (261 aa).

A disordered region spans residues 1 to 24; sequence MLARHGPRYGGSVNGHSDDSSGDA. Residues Ser-104, Asp-208, and His-236 contribute to the active site.

The protein belongs to the thioesterase family.

The catalysed reaction is a fatty acyl-CoA + H2O = a fatty acid + CoA + H(+). Involved in the synthesis of both phthiocerol dimycocerosates (PDIMs) and phenolic glycolipids (PGLs), which are structurally related lipids non-covalently bound to the outer cell wall layer of M.tuberculosis and are important virulence factors. In Mycobacterium bovis (strain ATCC BAA-935 / AF2122/97), this protein is Thioesterase TesA (tesA).